The sequence spans 272 residues: HMP-PP phosphatase (272 aa).

Aspartate 8 serves as the catalytic Nucleophile. The Mg(2+) site is built by aspartate 8, aspartate 10, and aspartate 212.

The protein belongs to the HAD-like hydrolase superfamily. Cof family. Requires Mg(2+) as cofactor.

It catalyses the reaction 4-amino-2-methyl-5-(diphosphooxymethyl)pyrimidine + H2O = 4-amino-2-methyl-5-(phosphooxymethyl)pyrimidine + phosphate + H(+). Functionally, catalyzes the hydrolysis of 4-amino-2-methyl-5-hydroxymethylpyrimidine pyrophosphate (HMP-PP) to 4-amino-2-methyl-5-hydroxymethylpyrimidine phosphate (HMP-P). This is HMP-PP phosphatase from Enterobacter sp. (strain 638).